The following is a 1221-amino-acid chain: DNA replication helicase (1221 aa).

A Nuclear localization signal motif is present at residues 692–701 (PKCKCYKKIK). An ATP-binding site is contributed by 917–924 (GEPGSGKS). The H-T-H motif DNA-binding region spans 967 to 981 (INELKQCSESYFKKH).

In terms of assembly, interacts with IE1 and LEF-3.

It is found in the host nucleus. The catalysed reaction is ATP + H2O = ADP + phosphate + H(+). Its function is as follows. Essential for initiation of viral DNA replication, it may contribute to other functions such as controlling the switch to the late phase and leading to the inhibition of host protein synthesis. Required for late and very late gene expression. The chain is DNA replication helicase (HELI) from Lepidoptera (butterflies and moths).